The following is a 177-amino-acid chain: Bifunctional protein PyrR (177 aa).

The PRPP-binding motif lies at 99-111 (VVLVDDVLFTGRT).

It belongs to the purine/pyrimidine phosphoribosyltransferase family. PyrR subfamily.

The catalysed reaction is UMP + diphosphate = 5-phospho-alpha-D-ribose 1-diphosphate + uracil. Functionally, regulates the transcription of the pyrimidine nucleotide (pyr) operon in response to exogenous pyrimidines. Also displays a weak uracil phosphoribosyltransferase activity which is not physiologically significant. The sequence is that of Bifunctional protein PyrR from Geobacter sp. (strain M21).